A 169-amino-acid polypeptide reads, in one-letter code: MQVDVDLQDAYSSSTAQVPIAAETWLTWFNRWFELLHPSLPPACSYELCLRLTDDGEIASLNSFYRQQPQPTDVLAFAALEVEVPRSPPDQTELLHLGDIVISVDTAQRQSLAGQHSLTVELAWLAAHGFLHLLGWDHPDPASLEQMLKQQSILLAAVGLENPALESFI.

Zn(2+)-binding residues include H128, H132, and H138.

It belongs to the endoribonuclease YbeY family. Zn(2+) serves as cofactor.

The protein localises to the cytoplasm. Functionally, single strand-specific metallo-endoribonuclease involved in late-stage 70S ribosome quality control and in maturation of the 3' terminus of the 16S rRNA. The chain is Endoribonuclease YbeY from Cyanothece sp. (strain PCC 7425 / ATCC 29141).